Here is a 585-residue protein sequence, read N- to C-terminus: Glutamate decarboxylase 2 (585 aa).

The interval 1 to 25 (MASPGSGFWSFGSEDGSGDPENPGT) is disordered. Phosphoserine is present on residues Ser3, Ser6, Ser10, Ser13, and Ser17. Residues Cys30 and Cys45 are each lipidated (S-palmitoyl cysteine). Position 181–183 (181–183 (QLS)) interacts with substrate. An N6-(pyridoxal phosphate)lysine modification is found at Lys396. Arg558 is a substrate binding site.

This sequence belongs to the group II decarboxylase family. In terms of assembly, homodimer. Pyridoxal 5'-phosphate serves as cofactor. In terms of processing, the N-terminus is blocked. Post-translationally, phosphorylated; which does not affect kinetic parameters or subcellular location. Palmitoylated; which is required for presynaptic clustering.

Its subcellular location is the cytoplasm. The protein localises to the cytosol. It localises to the cytoplasmic vesicle. It is found in the presynaptic cell membrane. The protein resides in the golgi apparatus membrane. The catalysed reaction is L-glutamate + H(+) = 4-aminobutanoate + CO2. Catalyzes the production of GABA. The protein is Glutamate decarboxylase 2 (Gad2) of Rattus norvegicus (Rat).